The sequence spans 565 residues: Proline--tRNA ligase (565 aa).

It belongs to the class-II aminoacyl-tRNA synthetase family. ProS type 1 subfamily. Homodimer.

The protein localises to the cytoplasm. It carries out the reaction tRNA(Pro) + L-proline + ATP = L-prolyl-tRNA(Pro) + AMP + diphosphate. Its function is as follows. Catalyzes the attachment of proline to tRNA(Pro) in a two-step reaction: proline is first activated by ATP to form Pro-AMP and then transferred to the acceptor end of tRNA(Pro). As ProRS can inadvertently accommodate and process non-cognate amino acids such as alanine and cysteine, to avoid such errors it has two additional distinct editing activities against alanine. One activity is designated as 'pretransfer' editing and involves the tRNA(Pro)-independent hydrolysis of activated Ala-AMP. The other activity is designated 'posttransfer' editing and involves deacylation of mischarged Ala-tRNA(Pro). The misacylated Cys-tRNA(Pro) is not edited by ProRS. The protein is Proline--tRNA ligase of Lactobacillus delbrueckii subsp. bulgaricus (strain ATCC 11842 / DSM 20081 / BCRC 10696 / JCM 1002 / NBRC 13953 / NCIMB 11778 / NCTC 12712 / WDCM 00102 / Lb 14).